The following is a 392-amino-acid chain: MVGELYRFITDFGVIEGYIIKEEPNYYLIKLKNGYNIGIKKSQIKEMENLNEKIKVGQFPKRKPKGIGNLGFIYTGGTIGSKVDYLTGGVSAIMDIEELLAIADLPYDIKIIDSPFVKFSEDLNPKDWVEIVKSIERTYKKGAEGIIVAHGTDTMHFSSAYAYYALENPIPIAFTGAQRSSDRASTDAVINLFASSIYANSNIGEVAIVMHETINDDTAIAIRGISARKMHSTRRDAFKSINEEPLARIYYPSGKLEIINKKYRKRSDKEMVAKPYLDTKGALIWVYPGFDPSILEYYRNYRGIIIAGTGMGHTSKELIPMLKELSKDLFIGITTQCIYGITHPYVYSRGRELSKFATYLQGTPEKNYVKLLYVLGKESDLDGIKKEMKRLP.

The 324-residue stretch at 68–391 (GNLGFIYTGG…DGIKKEMKRL (324 aa)) folds into the Asparaginase/glutaminase domain. Catalysis depends on residues threonine 78, threonine 152, aspartate 153, and lysine 229.

It belongs to the asparaginase 1 family. GatD subfamily. As to quaternary structure, heterodimer of GatD and GatE.

It carries out the reaction L-glutamyl-tRNA(Gln) + L-glutamine + ATP + H2O = L-glutaminyl-tRNA(Gln) + L-glutamate + ADP + phosphate + H(+). Allows the formation of correctly charged Gln-tRNA(Gln) through the transamidation of misacylated Glu-tRNA(Gln) in organisms which lack glutaminyl-tRNA synthetase. The reaction takes place in the presence of glutamine and ATP through an activated gamma-phospho-Glu-tRNA(Gln). The GatDE system is specific for glutamate and does not act on aspartate. The protein is Glutamyl-tRNA(Gln) amidotransferase subunit D (gatD) of Nanoarchaeum equitans (strain Kin4-M).